The sequence spans 102 residues: Large ribosomal subunit protein bL21 (102 aa).

This sequence belongs to the bacterial ribosomal protein bL21 family. In terms of assembly, part of the 50S ribosomal subunit. Contacts protein L20.

Functionally, this protein binds to 23S rRNA in the presence of protein L20. In Nitratiruptor sp. (strain SB155-2), this protein is Large ribosomal subunit protein bL21.